The primary structure comprises 590 residues: L-erythrulose kinase (590 aa).

The DhaK domain maps to 7-331; that stretch reads QPSSFARELT…WRAPADAPAF (325 aa). The Tele-hemiaminal-histidine intermediate role is filled by His217. The 203-residue stretch at 366 to 568 folds into the DhaL domain; sequence HCVAAALNAA…LAMILDAVSA (203 aa). ADP-binding positions include 398–401, 441–442, Gly483, Arg540, and 553–555; these read HGIG, TS, and DAG.

It carries out the reaction L-erythrulose + ATP = L-erythrulose 1-phosphate + ADP + H(+). It functions in the pathway carbohydrate metabolism. Functionally, involved in catabolism of D-apiose. Catalyzes the phosphorylation of L-erythrulose to L-erythrulose 1-phosphate. Can also phosphorylate D-erythrulose and dihydroxyacetone in vitro. This Pectobacterium atrosepticum (strain SCRI 1043 / ATCC BAA-672) (Erwinia carotovora subsp. atroseptica) protein is L-erythrulose kinase.